A 324-amino-acid chain; its full sequence is Homoserine kinase (324 aa).

An ATP-binding site is contributed by 100–110 (PLSSGMGSSAA).

The protein belongs to the GHMP kinase family. Homoserine kinase subfamily.

Its subcellular location is the cytoplasm. It catalyses the reaction L-homoserine + ATP = O-phospho-L-homoserine + ADP + H(+). Its pathway is amino-acid biosynthesis; L-threonine biosynthesis; L-threonine from L-aspartate: step 4/5. In terms of biological role, catalyzes the ATP-dependent phosphorylation of L-homoserine to L-homoserine phosphate. This is Homoserine kinase from Chlorobaculum tepidum (strain ATCC 49652 / DSM 12025 / NBRC 103806 / TLS) (Chlorobium tepidum).